Here is a 750-residue protein sequence, read N- to C-terminus: MIIRSPEPEVKILVDRDHIKTSFEEWARPGHFSRTLAKGPDTTTWIWNLHADAHDFDSHTSDLEEISRKVFSAHFGQLSIIFLWLSGMYFHGARFSNYEAWLSDPTHIGPSAQVVWPVVGQEILNGDVGGGFRGIQITSGFFQIWRASGITSELQLYCTAIGALIFAALMLFAGWFHYHKAAPKLAWFQDVESMLNHHLAGLLGLGSLSWAGHQVHVSLPINQFLNAGVDPKEIPLPHEFILNRDLLAQLYPSFAEGATPFFTLNWSKYADFLTFRGGLDPVTGGLWLTDIAHHHLAIAILFLIAGHMYKTNWGIGHGLKDILEAHKGPFTGQGHKGLYEILTTSWHAQLSLNLAMLGSLTIVVAHHMYSMPPYPYLATDYGTQLSLFTHHMWIGGFLIVGAAAHAAIFMVRDYDPTTRYNDLLDRVLRHRDAIISHLNWACIFLGFHSFGLYIHNDTMSALGRPQDMFSDTAIQLQPVFAQWIQNTHALAPGATAPGATTSTSLTWGGGDLVAVGGKVALLPIPLGTADFLVHHIHAFTIHVTVLILLKGVLFARSSRLIPDKANLGFRFPCDGPGRGGTCQVSAWDHVFLGLFWMYNAISVVIFHFSWKMQSDVWGSISDQGVVTHITGGNFAQSSITINGWLRDFLWAQASQVIQSYGSSLSAYGLFFLGAHFVWAFSLMFLFSGRGYWQELIESIVWAHNKLKVAPATQPRALSIVQGRAVGVTHYLLGGIATTWAFFLARIIAVG.

Helical transmembrane passes span Val70 to Ala93, Leu156 to His179, Leu195 to Leu219, Ile291 to Tyr309, Trp346 to Tyr369, Leu385 to Val411, Ala433 to His455, and Phe531 to Leu549. Cys573 and Cys582 together coordinate [4Fe-4S] cluster. Transmembrane regions (helical) follow at residues His589–Trp610 and Leu664–Phe686. His675 lines the chlorophyll a' pocket. Chlorophyll a is bound by residues Met683 and Tyr691. Trp692 is a binding site for phylloquinone. A helical transmembrane segment spans residues Ala724 to Ala744.

This sequence belongs to the PsaA/PsaB family. In terms of assembly, the PsaA/B heterodimer binds the P700 chlorophyll special pair and subsequent electron acceptors. PSI consists of a core antenna complex that captures photons, and an electron transfer chain that converts photonic excitation into a charge separation. The eukaryotic PSI reaction center is composed of at least 11 subunits. P700 is a chlorophyll a/chlorophyll a' dimer, A0 is one or more chlorophyll a, A1 is one or both phylloquinones and FX is a shared 4Fe-4S iron-sulfur center. is required as a cofactor.

The protein resides in the plastid. The protein localises to the chloroplast thylakoid membrane. It catalyses the reaction reduced [plastocyanin] + hnu + oxidized [2Fe-2S]-[ferredoxin] = oxidized [plastocyanin] + reduced [2Fe-2S]-[ferredoxin]. Functionally, psaA and PsaB bind P700, the primary electron donor of photosystem I (PSI), as well as the electron acceptors A0, A1 and FX. PSI is a plastocyanin-ferredoxin oxidoreductase, converting photonic excitation into a charge separation, which transfers an electron from the donor P700 chlorophyll pair to the spectroscopically characterized acceptors A0, A1, FX, FA and FB in turn. Oxidized P700 is reduced on the lumenal side of the thylakoid membrane by plastocyanin. The sequence is that of Photosystem I P700 chlorophyll a apoprotein A1 from Panax ginseng (Korean ginseng).